A 562-amino-acid polypeptide reads, in one-letter code: Arginine--tRNA ligase (562 aa).

A 'HIGH' region motif is present at residues P121–H131.

This sequence belongs to the class-I aminoacyl-tRNA synthetase family. In terms of assembly, monomer.

It localises to the cytoplasm. It carries out the reaction tRNA(Arg) + L-arginine + ATP = L-arginyl-tRNA(Arg) + AMP + diphosphate. The chain is Arginine--tRNA ligase from Limosilactobacillus reuteri (strain DSM 20016) (Lactobacillus reuteri).